The chain runs to 1370 residues: DNA-directed RNA polymerase subunit beta (1370 aa).

This sequence belongs to the RNA polymerase beta chain family. In terms of assembly, the RNAP catalytic core consists of 2 alpha, 1 beta, 1 beta' and 1 omega subunit. When a sigma factor is associated with the core the holoenzyme is formed, which can initiate transcription.

It catalyses the reaction RNA(n) + a ribonucleoside 5'-triphosphate = RNA(n+1) + diphosphate. Its function is as follows. DNA-dependent RNA polymerase catalyzes the transcription of DNA into RNA using the four ribonucleoside triphosphates as substrates. The protein is DNA-directed RNA polymerase subunit beta of Delftia acidovorans (strain DSM 14801 / SPH-1).